The chain runs to 673 residues: Putative K(+)-stimulated pyrophosphate-energized sodium pump (673 aa).

5 consecutive transmembrane segments (helical) span residues 3-23, 62-82, 84-104, 127-147, and 154-174; these read SFIV…FMLS, IVIV…ACFI, GAIF…KANV, VMGM…YYIF, and VTGF…GGGI. Residue lysine 177 coordinates substrate. Aspartate 180, aspartate 184, asparagine 207, and aspartate 210 together coordinate Mg(2+). Transmembrane regions (helical) follow at residues 222–242, 247–267, 279–299, 302–322, 364–384, and 387–407; these read LFES…VVYA, VMFP…GILF, ALNT…AILS, IFGN…GMII, LWPI…MGGG, and AMVG…TTGL. Aspartate 419 lines the Mg(2+) pocket. Helical transmembrane passes span 449–469, 486–506, 553–573, and 576–596; these read AAIG…SLFA, VTLV…ALTM, EMIL…LLLG, and ALGG…ILMS. Aspartate 603, aspartate 629, and aspartate 633 together coordinate Ca(2+). Substrate is bound at residue lysine 636. A helical membrane pass occupies residues 652-672; sequence IVSLVFAPVVLQYGGILLNLI.

This sequence belongs to the H(+)-translocating pyrophosphatase (TC 3.A.10) family. K(+)-stimulated subfamily. As to quaternary structure, homodimer. Mg(2+) is required as a cofactor.

It is found in the cell membrane. The catalysed reaction is Na(+)(in) + diphosphate + H2O = Na(+)(out) + 2 phosphate + H(+). Requires K(+) for maximal activity. Sodium pump that utilizes the energy of pyrophosphate hydrolysis as the driving force for Na(+) movement across the membrane. The chain is Putative K(+)-stimulated pyrophosphate-energized sodium pump from Clostridium tetani (strain Massachusetts / E88).